The following is a 443-amino-acid chain: DILAAFRVTPQPGVPPEEAGAAVXAESSTGTWTTVWTDGLTSLDRYKGRCYHIEPVPGEADQYICYVAYPLDLFEEGSVTNMFTSIVGNVFGFKALRALRLEDLRIPXAYVKTFQGPPHGIQVERDKLNKYGRPLLGCTIKPKLGLSAKNYGRACYECLRGGLDFTKDDENVNSQPFMRWRDRFLFCAEAIYKSQAETGEIKGHYLNATAGTCEEMMKRAVFARELGVPIIMHDYLTGGFTANTSLAHYCRDNGLLLHIHRAMHAVIDRQKNHGIHFRVLAKALRMSGGDHIHSGTVVGKLEGEREITLGFVDLLRDDFIEKDRSRGIYFTXDWVSLPGVIPVASGGIHVWHMPALTEIFGDDSVLQFGGGTLGHPWGNXPGAVANRVALEACVQARNEGRDLAAEGNTIIREASKWSPELAAACEVWKEIKFEFKPVDTLDV.

Residues N89 and T139 each contribute to the substrate site. The Proton acceptor role is filled by K141. A substrate-binding site is contributed by K143. The Mg(2+) site is built by K167, D169, and E170. Residue K167 is modified to N6-carboxylysine. The active-site Proton acceptor is the H260. Residues R261, H293, and S345 each contribute to the substrate site.

This sequence belongs to the RuBisCO large chain family. Type I subfamily. In terms of assembly, heterohexadecamer of 8 large chains and 8 small chains; disulfide-linked. The disulfide link is formed within the large subunit homodimers. It depends on Mg(2+) as a cofactor. In terms of processing, the disulfide bond which can form in the large chain dimeric partners within the hexadecamer appears to be associated with oxidative stress and protein turnover.

Its subcellular location is the plastid. The protein localises to the chloroplast. It carries out the reaction 2 (2R)-3-phosphoglycerate + 2 H(+) = D-ribulose 1,5-bisphosphate + CO2 + H2O. It catalyses the reaction D-ribulose 1,5-bisphosphate + O2 = 2-phosphoglycolate + (2R)-3-phosphoglycerate + 2 H(+). RuBisCO catalyzes two reactions: the carboxylation of D-ribulose 1,5-bisphosphate, the primary event in carbon dioxide fixation, as well as the oxidative fragmentation of the pentose substrate in the photorespiration process. Both reactions occur simultaneously and in competition at the same active site. The protein is Ribulose bisphosphate carboxylase large chain of Antirrhinum majus (Garden snapdragon).